The chain runs to 835 residues: MGNYKSRPTQTCTDEWKKKVSESYVITIERLEDDLQIKEKELTELRNIFGSDEAFSKVNLNYRTENGLSLLHLCCICGGKKSHIRTLMLKGLRPSRLTRNGFTALHLAVYKDNAELITSLLHSGADIQQVGYGGLTALHIATIAGHLEAADVLLQHGANVNIQDAVFFTPLHIAAYYGHEQVTRLLLKFGADVNVSGEVGDRPLHLASAKGFLNIAKLLMEEGSKADVNAQDNEDHVPLHFCSRFGHHDIVKYLLQSDLEVQPHVVNIYGDTPLHLACYNGKFEVAKEIIQISGTESLTKENIFSETAFHSACTYGKSIDLVKFLLDQNVININHQGRDGHTGLHSACYHGHIRLVQFLLDNGADMNLVACDPSRSSGEKDEQTCLMWAYEKGHDAIVTLLKHYKRPQDELPCNEYSQPGGDGSYVSVPSPLGKIKSMTKEKADILLLRAGLPSHFHLQLSEIEFHEIIGSGSFGKVYKGRCRNKIVAIKRYRANTYCSKSDVDMFCREVSILCQLNHPCVIQFVGACLNDPSQFAIVTQYISGGSLFSLLHEQKRILDLQSKLIIAVDVAKGMEYLHNLTQPIIHRDLNSHNILLYEDGHAVVADFGESRFLQSLDEDNMTKQPGNLRWMAPEVFTQCTRYTIKADVFSYALCLWEILTGEIPFAHLKPAAAAADMAYHHIRPPIGYSIPKPISSLLIRGWNACPEGRPEFSEVVMKLEECLCNIELMSPASSNSSGSLSPSSSSDCLVNRGGPGRSHVAALRSRFELEYALNARSYAALSQSAGQYSSQGLSLEEMKRSLQYTPIDKYGYVSDPMSSMHFHSCRNSSSFEDSS.

A coiled-coil region spans residues 21–51; the sequence is SESYVITIERLEDDLQIKEKELTELRNIFGS. ANK repeat units lie at residues 66–96, 100–129, 133–162, 166–195, 199–228, 234–263, 269–298, 304–335, 339–368, and 381–410; these read NGLSLLHLCCICGGKKSHIRTLMLKGLRPSR, NGFTALHLAVYKDNAELITSLLHSGADIQQ, GGLTALHIATIAGHLEAADVLLQHGANVNI, VFFTPLHIAAYYGHEQVTRLLLKFGADVNV, VGDRPLHLASAKGFLNIAKLLMEEGSKADV, EDHVPLHFCSRFGHHDIVKYLLQSDLEVQP, YGDTPLHLACYNGKFEVAKEIIQISGTESL, FSETAFHSACTYGKSIDLVKFLLDQNVININH, DGHTGLHSACYHGHIRLVQFLLDNGADMNL, and DEQTCLMWAYEKGHDAIVTLLKHYKRPQDE. The Protein kinase domain maps to 463 to 723; that stretch reads IEFHEIIGSG…EVVMKLEECL (261 aa). ATP is bound by residues 469–477 and lysine 490; that span reads IGSGSFGKV. Aspartate 588 (proton acceptor) is an active-site residue. The span at 732-746 shows a compositional bias: low complexity; sequence ASSNSSGSLSPSSSS. The segment at 732 to 751 is disordered; it reads ASSNSSGSLSPSSSSDCLVN.

The protein belongs to the protein kinase superfamily. TKL Ser/Thr protein kinase family. MAP kinase kinase kinase subfamily. As to quaternary structure, interacts with TNNI3, ACTC1, ACTA1, MYBPC3, AIP, FABP3 and HADHB. Mg(2+) is required as a cofactor. In terms of processing, autophosphorylated. In terms of tissue distribution, highly expressed in both adult and fetal heart.

It localises to the nucleus. It is found in the cytoplasm. It carries out the reaction L-seryl-[protein] + ATP = O-phospho-L-seryl-[protein] + ADP + H(+). The enzyme catalyses L-threonyl-[protein] + ATP = O-phospho-L-threonyl-[protein] + ADP + H(+). May play a role in cardiac physiology. In Homo sapiens (Human), this protein is Serine/threonine-protein kinase TNNI3K.